A 226-amino-acid polypeptide reads, in one-letter code: MMLEIPDVLTSAQLRQCREALEKAAWQDGRQTAGHMAAQAKNNQQLAQDDPLSVELGEFLLDRLGKTDRFIAAALPLKVLPPRFNRYSGGGNYGNHVDAAIFSVPGTPHRIRSDISATLFFSEPDEYEGGELIVEDTYGSHAIKLPAGHMVLYPGTSLHRVAPVTKGVRLASFFWVQSLVREDSQRAMLWELDGAIQRVTLDTPESPALPQLMALYHNLLRRWSNT.

Residues 78–178 (KVLPPRFNRY…RLASFFWVQS (101 aa)) form the Fe2OG dioxygenase domain. Fe cation contacts are provided by H96, D98, and H159. R169 is a binding site for 2-oxoglutarate.

Fe(2+) is required as a cofactor. It depends on L-ascorbate as a cofactor.

In Parvibaculum lavamentivorans (strain DS-1 / DSM 13023 / NCIMB 13966), this protein is PKHD-type hydroxylase Plav_0377.